The primary structure comprises 148 residues: Ubiquitin-conjugating enzyme E2 11 (148 aa).

In terms of domain architecture, UBC core spans 1–147 (MASKRILKEL…ARSWTQKYAM (147 aa)). C85 serves as the catalytic Glycyl thioester intermediate.

This sequence belongs to the ubiquitin-conjugating enzyme family. Interacts with the E3 ubiquitin-protein ligases MBR1 and MBR2. In terms of tissue distribution, ubiquitously expressed. Mainly in petals.

It carries out the reaction S-ubiquitinyl-[E1 ubiquitin-activating enzyme]-L-cysteine + [E2 ubiquitin-conjugating enzyme]-L-cysteine = [E1 ubiquitin-activating enzyme]-L-cysteine + S-ubiquitinyl-[E2 ubiquitin-conjugating enzyme]-L-cysteine.. The protein operates within protein modification; protein ubiquitination. Functionally, accepts the ubiquitin from the E1 complex and catalyzes its covalent attachment to other proteins. Mediates the selective degradation of short-lived and abnormal proteins. The polypeptide is Ubiquitin-conjugating enzyme E2 11 (UBC11) (Arabidopsis thaliana (Mouse-ear cress)).